Here is a 256-residue protein sequence, read N- to C-terminus: 5'-nucleotidase SurE (256 aa).

Positions 9, 10, 42, and 95 each coordinate a divalent metal cation.

It belongs to the SurE nucleotidase family. A divalent metal cation serves as cofactor.

Its subcellular location is the cytoplasm. The enzyme catalyses a ribonucleoside 5'-phosphate + H2O = a ribonucleoside + phosphate. Its function is as follows. Nucleotidase that shows phosphatase activity on nucleoside 5'-monophosphates. The chain is 5'-nucleotidase SurE from Campylobacter curvus (strain 525.92).